Consider the following 533-residue polypeptide: Probable metalloreductase AIM14 (533 aa).

Helical transmembrane passes span 17–37 (IPYG…LIGA), 61–81 (GGSP…PFVH), 102–122 (VLAT…PGYV), 136–156 (SLCL…ALDS), 168–188 (IPNL…LLSV), 198–218 (SFYL…AYHA), and 220–240 (PGVF…YILS). The Ferric oxidoreductase domain maps to 96–213 (LGRLSYVLAT…IIGAWVFVFL (118 aa)). An FAD-binding FR-type domain is found at 240–366 (SKTVPARGVE…GGSGLSYALP (127 aa)).

It belongs to the ferric reductase (FRE) family. AIM14 subfamily.

Its subcellular location is the membrane. In terms of biological role, probable cell surface metalloreductase. May be involved in iron or copper homeostasis. The chain is Probable metalloreductase AIM14 (AIM14) from Lachancea thermotolerans (strain ATCC 56472 / CBS 6340 / NRRL Y-8284) (Yeast).